A 110-amino-acid polypeptide reads, in one-letter code: Small ribosomal subunit protein uS10m (110 aa).

Belongs to the universal ribosomal protein uS10 family.

Its subcellular location is the mitochondrion. The sequence is that of Small ribosomal subunit protein uS10m (RPS10) from Pisum sativum (Garden pea).